A 352-amino-acid chain; its full sequence is DNA polymerase IV (352 aa).

Positions 4 to 185 (IIHVDMDCFF…LPLSKIPGVG (182 aa)) constitute a UmuC domain. Asp8 and Asp103 together coordinate Mg(2+). Residue Glu104 is part of the active site.

Belongs to the DNA polymerase type-Y family. As to quaternary structure, monomer. Mg(2+) serves as cofactor.

It localises to the cytoplasm. The catalysed reaction is DNA(n) + a 2'-deoxyribonucleoside 5'-triphosphate = DNA(n+1) + diphosphate. Poorly processive, error-prone DNA polymerase involved in untargeted mutagenesis. Copies undamaged DNA at stalled replication forks, which arise in vivo from mismatched or misaligned primer ends. These misaligned primers can be extended by PolIV. Exhibits no 3'-5' exonuclease (proofreading) activity. May be involved in translesional synthesis, in conjunction with the beta clamp from PolIII. The sequence is that of DNA polymerase IV from Yersinia enterocolitica serotype O:8 / biotype 1B (strain NCTC 13174 / 8081).